An 842-amino-acid polypeptide reads, in one-letter code: ATP-binding cassette sub-family B member 6 (842 aa).

Topologically, residues 1-26 (MVTVGNYCEAEGPLGPAWAQNGLSPC) are lumenal. Positions 1–205 (MVTVGNYCEA…SGGLFILGLW (205 aa)) are required for the lysosomal targeting. Residues 1–236 (MVTVGNYCEA…RNQAQSTDRT (236 aa)) form a required for ATPase activity region. A disulfide bridge links Cys-8 with Cys-26. A helical transmembrane segment spans residues 27–47 (FFFTLVPSTLMALGALALVLV). The Cytoplasmic portion of the chain corresponds to 48-72 (LPCRRRDVPSGTEELFWAADSRVAP). Residues 73-93 (YALQLFLATLQVALPLAGLAG) form a helical membrane-spanning segment. Over 94–106 (RVGTARGVRLPGY) the chain is Lumenal. The helical transmembrane segment at 107 to 127 (LLLASMLGSLASACGLWLLVA) threads the bilayer. Topologically, residues 128 to 147 (ERRQARQSLAMGVWMKFRHS) are cytoplasmic. The helical transmembrane segment at 148–168 (SGLLLLWTVAFAAENLALVSW) threads the bilayer. The Lumenal segment spans residues 169–185 (NSPQWWWARADLGQQVQ). A helical membrane pass occupies residues 186 to 206 (FGLWVLRYVISGGLFILGLWA). At 207–263 (PGLRPQSYTLRVHEADQDVERNQAQSTDRTSTWRDLGRKLRLLSSYLWPRGSPALQF) the chain is on the cytoplasmic side. The chain crosses the membrane as a helical span at residues 264 to 284 (IVLICLGLMGLDRALNVLVPI). An ABC transmembrane type-1 domain is found at 265–556 (VLICLGLMGL…FGTYYRMIQT (292 aa)). The Lumenal segment spans residues 285–305 (FYRDIVNLLTSKAPWSSLAWT). The chain crosses the membrane as a helical span at residues 306 to 326 (VTTYVFLKFLQGGGTGSTGFV). Over 327 to 375 (SNLRTFLWIRVQQFTSRGVELRLFSHLHELSLRWHLGRRTGEVLRVVDR) the chain is Cytoplasmic. A helical membrane pass occupies residues 376-396 (GTSSVTGLLSYLVFNIIPTLA). Residue Asp-397 is a topological domain, lumenal. The chain crosses the membrane as a helical span at residues 398–418 (IIIGIIYFSMFFNAWFGLIVF). The Cytoplasmic portion of the chain corresponds to 419–499 (LCMSLYLFLT…SSASLVVLNQ (81 aa)). Residues 500 to 520 (TQNLVIGLGLLAGSLLCAYFV) form a helical membrane-spanning segment. Topologically, residues 521 to 529 (SEQKLQVGD) are lumenal. A helical transmembrane segment spans residues 530 to 550 (FVLFGTYITQLYMPLNWFGTY). Residues 551-842 (YRMIQTNFID…SEDSKPQDIA (292 aa)) are Cytoplasmic-facing. The 235-residue stretch at 590–824 (IEFENVHFSY…GGVYAEMWQL (235 aa)) folds into the ABC transporter domain. 623–630 (GPSGAGKS) provides a ligand contact to ATP.

The protein belongs to the ABC transporter superfamily. ABCB family. Heavy Metal importer (TC 3.A.1.210) subfamily. In terms of assembly, homodimer. N-glycosylated. In terms of tissue distribution, highly expressed in the liver, adrenal glands, and testis.

The protein resides in the cell membrane. It localises to the mitochondrion outer membrane. The protein localises to the endoplasmic reticulum membrane. It is found in the golgi apparatus membrane. Its subcellular location is the endosome membrane. The protein resides in the lysosome membrane. It localises to the late endosome membrane. The protein localises to the early endosome membrane. It is found in the secreted. Its subcellular location is the extracellular exosome. The protein resides in the mitochondrion. It localises to the endosome. The protein localises to the multivesicular body membrane. It is found in the melanosome membrane. The catalysed reaction is heme b(in) + ATP + H2O = heme b(out) + ADP + phosphate + H(+). It catalyses the reaction coproporphyrin III(in) + ATP + H2O = coproporphyrin III(out) + ADP + phosphate + H(+). The enzyme catalyses pheophorbide a(in) + ATP + H2O = pheophorbide a(out) + ADP + phosphate + H(+). It carries out the reaction coproporphyrinogen III(in) + ATP + H2O = coproporphyrinogen III(out) + ADP + phosphate + H(+). The catalysed reaction is protoporphyrin IX(in) + ATP + H2O = protoporphyrin IX(out) + ADP + phosphate + H(+). It catalyses the reaction coproporphyrin I(in) + ATP + H2O = coproporphyrin I(out) + ADP + phosphate + H(+). The enzyme catalyses uroporphyrin I(in) + ATP + H2O = uroporphyrin I(out) + ADP + phosphate + H(+). It carries out the reaction uroporphyrin III(in) + ATP + H2O = uroporphyrin III(out) + ADP + phosphate + H(+). Functionally, ATP-dependent transporter that catalyzes the transport of a broad-spectrum of porphyrins from the cytoplasm to the extracellular space through the plasma membrane or into the vesicle lumen. May also function as an ATP-dependent importer of porphyrins from the cytoplasm into the mitochondria, in turn may participate in the de novo heme biosynthesis regulation and in the coordination of heme and iron homeostasis during phenylhydrazine stress. May also play a key role in the early steps of melanogenesis producing PMEL amyloid fibrils. In vitro, it confers to cells a resistance to toxic metal such as arsenic and cadmium and against chemotherapeutics agent such as 5-fluorouracil, SN-38 and vincristin. In addition may play a role in the transition metal homeostasis. This chain is ATP-binding cassette sub-family B member 6, found in Mesocricetus auratus (Golden hamster).